The sequence spans 360 residues: Phenylalanine--tRNA ligase alpha subunit (360 aa).

Glu-260 provides a ligand contact to Mg(2+).

This sequence belongs to the class-II aminoacyl-tRNA synthetase family. Phe-tRNA synthetase alpha subunit type 1 subfamily. As to quaternary structure, tetramer of two alpha and two beta subunits. Requires Mg(2+) as cofactor.

Its subcellular location is the cytoplasm. The catalysed reaction is tRNA(Phe) + L-phenylalanine + ATP = L-phenylalanyl-tRNA(Phe) + AMP + diphosphate + H(+). This is Phenylalanine--tRNA ligase alpha subunit from Rhodopseudomonas palustris (strain ATCC BAA-98 / CGA009).